Consider the following 236-residue polypeptide: Leucyl/phenylalanyl-tRNA--protein transferase (236 aa).

It belongs to the L/F-transferase family.

It localises to the cytoplasm. The catalysed reaction is N-terminal L-lysyl-[protein] + L-leucyl-tRNA(Leu) = N-terminal L-leucyl-L-lysyl-[protein] + tRNA(Leu) + H(+). It catalyses the reaction N-terminal L-arginyl-[protein] + L-leucyl-tRNA(Leu) = N-terminal L-leucyl-L-arginyl-[protein] + tRNA(Leu) + H(+). It carries out the reaction L-phenylalanyl-tRNA(Phe) + an N-terminal L-alpha-aminoacyl-[protein] = an N-terminal L-phenylalanyl-L-alpha-aminoacyl-[protein] + tRNA(Phe). Functions in the N-end rule pathway of protein degradation where it conjugates Leu, Phe and, less efficiently, Met from aminoacyl-tRNAs to the N-termini of proteins containing an N-terminal arginine or lysine. The protein is Leucyl/phenylalanyl-tRNA--protein transferase of Shewanella sp. (strain MR-4).